The chain runs to 367 residues: Probable outer membrane usher protein LpfC (367 aa).

An N-terminal signal peptide occupies residues 1–30 (MSRKTVSRTFSSFSISVVAVAVASTFSAHA).

This sequence belongs to the fimbrial export usher family.

The protein localises to the cell outer membrane. Its function is as follows. Part of the lpfABCC'DE fimbrial operon. LP fimbriae may participate in the interaction with eukaryotic cells by assisting in microcolony formation. Could be involved in the export and assembly of the fimbrial subunits across the outer membrane. In Escherichia coli O157:H7, this protein is Probable outer membrane usher protein LpfC (lpfC).